The chain runs to 400 residues: Acetate kinase (400 aa).

Mg(2+) is bound at residue Asn10. Residue Lys17 participates in ATP binding. Arg91 contributes to the substrate binding site. Asp148 functions as the Proton donor/acceptor in the catalytic mechanism. Residues 208-212 (HLGNG), 283-285 (DCR), and 331-335 (GIGEN) contribute to the ATP site. Position 385 (Glu385) interacts with Mg(2+).

It belongs to the acetokinase family. In terms of assembly, homodimer. Mg(2+) serves as cofactor. It depends on Mn(2+) as a cofactor.

Its subcellular location is the cytoplasm. The enzyme catalyses acetate + ATP = acetyl phosphate + ADP. It functions in the pathway metabolic intermediate biosynthesis; acetyl-CoA biosynthesis; acetyl-CoA from acetate: step 1/2. Catalyzes the formation of acetyl phosphate from acetate and ATP. Can also catalyze the reverse reaction. This is Acetate kinase from Shewanella frigidimarina (strain NCIMB 400).